The sequence spans 490 residues: ATP synthase subunit beta, chloroplastic (490 aa).

Phosphothreonine is present on Thr6. Position 13 is a phosphoserine (Ser13). 172 to 179 (GGAGVGKT) serves as a coordination point for ATP.

This sequence belongs to the ATPase alpha/beta chains family. F-type ATPases have 2 components, CF(1) - the catalytic core - and CF(0) - the membrane proton channel. CF(1) has five subunits: alpha(3), beta(3), gamma(1), delta(1), epsilon(1). CF(0) has four main subunits: a(1), b(1), b'(1) and c(9-12).

Its subcellular location is the plastid. The protein resides in the chloroplast thylakoid membrane. The catalysed reaction is ATP + H2O + 4 H(+)(in) = ADP + phosphate + 5 H(+)(out). Produces ATP from ADP in the presence of a proton gradient across the membrane. The catalytic sites are hosted primarily by the beta subunits. This chain is ATP synthase subunit beta, chloroplastic, found in Aethionema cordifolium (Lebanon stonecress).